We begin with the raw amino-acid sequence, 465 residues long: L-seryl-tRNA(Sec) selenium transferase (465 aa).

An N6-(pyridoxal phosphate)lysine modification is found at Lys-294.

It belongs to the SelA family. The cofactor is pyridoxal 5'-phosphate.

It is found in the cytoplasm. The enzyme catalyses L-seryl-tRNA(Sec) + selenophosphate + H(+) = L-selenocysteinyl-tRNA(Sec) + phosphate. It participates in aminoacyl-tRNA biosynthesis; selenocysteinyl-tRNA(Sec) biosynthesis; selenocysteinyl-tRNA(Sec) from L-seryl-tRNA(Sec) (bacterial route): step 1/1. Its function is as follows. Converts seryl-tRNA(Sec) to selenocysteinyl-tRNA(Sec) required for selenoprotein biosynthesis. In Maridesulfovibrio salexigens (strain ATCC 14822 / DSM 2638 / NCIMB 8403 / VKM B-1763) (Desulfovibrio salexigens), this protein is L-seryl-tRNA(Sec) selenium transferase.